A 134-amino-acid polypeptide reads, in one-letter code: MMACRTLCLVVVMVASLGTSGVGGRSVEGASRMEKLLSSSNSPSSTPLGFLSQDHSVNKRQVFDQACKGVYDRNLFKKLDRVCEDCYNLYRKPFVATTCRENCYSNWVFRQCLDDLLLSDVIDEYVSNVQMVGK.

Residues 1 to 24 form the signal peptide; it reads MMACRTLCLVVVMVASLGTSGVGG. The residue at position 61 (Q61) is a Pyrrolidone carboxylic acid. A D-phenylalanine; in form CHH-A-II modification is found at F63. 3 disulfides stabilise this stretch: C67–C103, C83–C99, and C86–C112. V132 carries the post-translational modification Valine amide.

This sequence belongs to the arthropod CHH/MIH/GIH/VIH hormone family. In terms of processing, stereoinversion of L-Phe (form CHH-A-I) to D-Phe (form CHH-A-II). In terms of tissue distribution, produced by the medulla terminalis X-organ in the eyestalks and transported to the sinus gland where they are stored and released. Present also in the ventral nervous system.

It localises to the secreted. In terms of biological role, CHH is the most abundant hormone in the sinus gland of isopods and decapods which controls the blood sugar level. Has a secretagogue action over the amylase released from the midgut gland. May act as a stress hormone. Its function is as follows. MIH may inhibit Y-organs where molting hormone (ecdysteroid) is secreted and a molting cycle is initiated when MIH secretion diminishes or stops. The sequence is that of Crustacean hyperglycemic hormones isoform A from Homarus americanus (American lobster).